Here is a 94-residue protein sequence, read N- to C-terminus: Putative pterin-4-alpha-carbinolamine dehydratase (94 aa).

This sequence belongs to the pterin-4-alpha-carbinolamine dehydratase family.

It catalyses the reaction (4aS,6R)-4a-hydroxy-L-erythro-5,6,7,8-tetrahydrobiopterin = (6R)-L-erythro-6,7-dihydrobiopterin + H2O. This is Putative pterin-4-alpha-carbinolamine dehydratase from Koribacter versatilis (strain Ellin345).